Reading from the N-terminus, the 146-residue chain is Putative phosphotransferase enzyme IIA component YadI (146 aa).

A PTS EIIA type-4 domain is found at 1 to 124 (MLGWVITCHD…RIVELGAPEV (124 aa)). H9 acts as the Tele-phosphohistidine intermediate in catalysis.

It is found in the cytoplasm. The phosphoenolpyruvate-dependent sugar phosphotransferase system (sugar PTS), a major carbohydrate active -transport system, catalyzes the phosphorylation of incoming sugar substrates concomitantly with their translocation across the cell membrane. The protein is Putative phosphotransferase enzyme IIA component YadI (yadI) of Escherichia coli (strain K12).